Consider the following 844-residue polypeptide: Striatin-interacting proteins 2 (844 aa).

Residues 1-18 (MDDPAAPGPAGSPANDNG) are compositionally biased toward low complexity. Residues 1–58 (MDDPAAPGPAGSPANDNGNGNGNGNGNGNGGKGKPAVPKGRETFRNQRRESEGSVDCP) are disordered. Over residues 19–33 (NGNGNGNGNGNGGKG) the composition is skewed to gly residues. The segment covering 39–52 (KGRETFRNQRRESE) has biased composition (basic and acidic residues). Ser-328, Ser-339, and Ser-364 each carry phosphoserine. Residues 331–355 (SYTLDLGESQLAPPPSKLRGRRGSR) form a disordered region. The disordered stretch occupies residues 370-422 (ERDLFKTEEPATEEEEESAADGERTLDGELDLLEQDPLVPPPPSQTPLSTDRV). A compositionally biased stretch (acidic residues) spans 379–389 (PATEEEEESAA).

This sequence belongs to the STRIP family. In terms of assembly, part of the core of STRIPAK complexes composed of PP2A catalytic and scaffolding subunits, the striatins (PP2A regulatory subunits), the striatin-associated proteins MOB4, STRIP1 and STRIP2, PDCD10 and members of the STE20 kinases, such as STK24 and STK26. Interacts with CTTNBP2NL.

The protein localises to the cytoplasm. In terms of biological role, plays a role in the regulation of cell morphology and cytoskeletal organization. Required in the control of cell shape. Calmodulin-binding scaffolding protein which is the center of the striatin-interacting phosphatase and kinase (STRIPAK) complexes. STRIPAK complexes have critical roles in protein (de)phosphorylation and are regulators of multiple signaling pathways including Hippo, MAPK, nuclear receptor and cytoskeleton remodeling. Different types of STRIPAK complexes are involved in a variety of biological processes such as cell growth, differentiation, apoptosis, metabolism and immune regulation. In Mus musculus (Mouse), this protein is Striatin-interacting proteins 2 (Strip2).